We begin with the raw amino-acid sequence, 469 residues long: ATP-dependent protease ATPase subunit HslU (469 aa).

ATP is bound by residues Ile-24 and 66 to 71 (GVGKTE). The interval 159-179 (LFGSMNQPDEPAEEEVDQELK) is disordered. Positions 282, 347, and 419 each coordinate ATP.

This sequence belongs to the ClpX chaperone family. HslU subfamily. In terms of assembly, a double ring-shaped homohexamer of HslV is capped on each side by a ring-shaped HslU homohexamer. The assembly of the HslU/HslV complex is dependent on binding of ATP.

The protein resides in the cytoplasm. ATPase subunit of a proteasome-like degradation complex; this subunit has chaperone activity. The binding of ATP and its subsequent hydrolysis by HslU are essential for unfolding of protein substrates subsequently hydrolyzed by HslV. HslU recognizes the N-terminal part of its protein substrates and unfolds these before they are guided to HslV for hydrolysis. The protein is ATP-dependent protease ATPase subunit HslU of Listeria innocua serovar 6a (strain ATCC BAA-680 / CLIP 11262).